We begin with the raw amino-acid sequence, 340 residues long: Phospho-N-acetylmuramoyl-pentapeptide-transferase (340 aa).

The next 9 membrane-spanning stretches (helical) occupy residues valine 24 to leucine 44, threonine 69 to tryptophan 89, alanine 95 to isoleucine 115, leucine 129 to proline 149, glycine 156 to glycine 176, alanine 196 to phenylalanine 216, leucine 235 to leucine 255, tryptophan 260 to valine 280, and valine 316 to histidine 336.

Belongs to the glycosyltransferase 4 family. MraY subfamily. It depends on Mg(2+) as a cofactor.

The protein resides in the cell inner membrane. The catalysed reaction is UDP-N-acetyl-alpha-D-muramoyl-L-alanyl-gamma-D-glutamyl-meso-2,6-diaminopimeloyl-D-alanyl-D-alanine + di-trans,octa-cis-undecaprenyl phosphate = di-trans,octa-cis-undecaprenyl diphospho-N-acetyl-alpha-D-muramoyl-L-alanyl-D-glutamyl-meso-2,6-diaminopimeloyl-D-alanyl-D-alanine + UMP. It functions in the pathway cell wall biogenesis; peptidoglycan biosynthesis. In terms of biological role, catalyzes the initial step of the lipid cycle reactions in the biosynthesis of the cell wall peptidoglycan: transfers peptidoglycan precursor phospho-MurNAc-pentapeptide from UDP-MurNAc-pentapeptide onto the lipid carrier undecaprenyl phosphate, yielding undecaprenyl-pyrophosphoryl-MurNAc-pentapeptide, known as lipid I. The polypeptide is Phospho-N-acetylmuramoyl-pentapeptide-transferase (Synechococcus sp. (strain JA-3-3Ab) (Cyanobacteria bacterium Yellowstone A-Prime)).